The following is a 527-amino-acid chain: Flavonoid 3',5'-hydroxylase CYP75B138 (527 aa).

A helical transmembrane segment spans residues 6–26 (LDIILFISAIVFLSIYYYNLF). Position 459 (Cys459) interacts with heme.

This sequence belongs to the cytochrome P450 family. Heme is required as a cofactor. In terms of tissue distribution, expressed in young cromes.

It localises to the membrane. It catalyses the reaction a 3',5'-unsubstituted flavanone + 2 reduced [NADPH--hemoprotein reductase] + 2 O2 = a 3',5'-dihydroxyflavanone + 2 oxidized [NADPH--hemoprotein reductase] + 2 H2O + 2 H(+). The enzyme catalyses (2S)-naringenin + 2 reduced [NADPH--hemoprotein reductase] + 2 O2 = (2S)-dihydrotricetin + 2 oxidized [NADPH--hemoprotein reductase] + 2 H2O + 2 H(+). The catalysed reaction is (2R,3R)-dihydrokaempferol + 2 reduced [NADPH--hemoprotein reductase] + 2 O2 = (2R,3R)-dihydromyricetin + 2 oxidized [NADPH--hemoprotein reductase] + 2 H2O + 2 H(+). It carries out the reaction kaempferol + 2 reduced [NADPH--hemoprotein reductase] + 2 O2 = myricetin + 2 oxidized [NADPH--hemoprotein reductase] + 2 H2O + 2 H(+). The protein operates within flavonoid metabolism. Flavonoid 3',5'-hydroxylase that catalyzes the 3'- and 5'-hydroxylation of flavanones, dihydroflavonols and flavonols. Converts narigenin to dihydrotricetin, dihydrokaempferol to dihydromyricetin and kaempferol to myricetin. This Crocosmia x crocosmiiflora (Montbretia) protein is Flavonoid 3',5'-hydroxylase CYP75B138.